Reading from the N-terminus, the 237-residue chain is Redox-sensing transcriptional repressor Rex (237 aa).

The segment at residues 45-84 (LYYRELHRLLAAGESSTNSRDLGAMVNVSPAVVRRDLSSI) is a DNA-binding region (H-T-H motif). Residue 119-124 (GVGSLG) participates in NAD(+) binding.

The protein belongs to the transcriptional regulatory Rex family. In terms of assembly, homodimer.

The protein localises to the cytoplasm. In terms of biological role, modulates transcription in response to changes in cellular NADH/NAD(+) redox state. The polypeptide is Redox-sensing transcriptional repressor Rex (Rhodopirellula baltica (strain DSM 10527 / NCIMB 13988 / SH1)).